The chain runs to 499 residues: MAELIIVDFQNISIFILLCLFSFLCYALFFKKPKGFDLPPSPPSLPIIGHLHHLLSSSLPHKSFQKLSFKYGPLLHLRIFNFPMVLVSSASMAYEVFRTNDVNVSYRFVPVNKDSLVFGSSGFVTAPYGDYWKFMKKLISTKLLRPHALELSKGNRAEELRRFCLDLQGKARKKESVEIGKVALKLTNNIICRMSMGRSCSEKNGVAERARELVNKSFALSVKLFFSNMFRKDIMGVSREFDEFLERILVEHEENLEGDQDRDMIDHLLEAYRNEEAEYKITRKQIKSLIVEIFLGGTDSSAQTIQWTMAEILNNPGVLEKLRAEIDSVVGGKRLIQESDLPNLPYLQAVVKEGLRLHPSAPVLLRVFGESCEVKEFYVPEKTTLVVNLYAVNRDPDSWEDPDMFKPERFLVSSISGDEEKIREQAVKYVTFGGGRRTCPAVKLAHIFMETAIGAMVQCFDWRIKGEKVYMEEAVSGLSLKMAHPLKCTPVVRFDPFSF.

A helical transmembrane segment spans residues 4 to 24 (LIIVDFQNISIFILLCLFSFL). Residue Cys439 coordinates heme.

It belongs to the cytochrome P450 family. It depends on heme as a cofactor.

Its subcellular location is the membrane. Functionally, may be involved in hydroxylation of the triterpene marneral. This Arabidopsis thaliana (Mouse-ear cress) protein is Cytochrome P450 705A12.